A 464-amino-acid polypeptide reads, in one-letter code: ATP-dependent protease ATPase subunit HslU (464 aa).

ATP is bound by residues valine 18, 60–65 (GVGKTE), aspartate 277, glutamate 342, and arginine 414.

This sequence belongs to the ClpX chaperone family. HslU subfamily. A double ring-shaped homohexamer of HslV is capped on each side by a ring-shaped HslU homohexamer. The assembly of the HslU/HslV complex is dependent on binding of ATP.

It is found in the cytoplasm. Functionally, ATPase subunit of a proteasome-like degradation complex; this subunit has chaperone activity. The binding of ATP and its subsequent hydrolysis by HslU are essential for unfolding of protein substrates subsequently hydrolyzed by HslV. HslU recognizes the N-terminal part of its protein substrates and unfolds these before they are guided to HslV for hydrolysis. The sequence is that of ATP-dependent protease ATPase subunit HslU from Lactobacillus delbrueckii subsp. bulgaricus (strain ATCC BAA-365 / Lb-18).